The primary structure comprises 508 residues: Carboxypeptidase Y homolog ARB_05721 (508 aa).

The N-terminal stretch at 1-25 (MELYLNMLSFWYILLATSFFGPSQA) is a signal peptide. N132 and N169 each carry an N-linked (GlcNAc...) asparagine glycan. S204 is an active-site residue. N-linked (GlcNAc...) asparagine glycosylation occurs at N268. Disulfide bonds link C282/C305, C289/C298, and C332/C338. The active site involves D410. C413 provides a ligand contact to substrate. N451 carries N-linked (GlcNAc...) asparagine glycosylation. Residue H484 is part of the active site. M485 provides a ligand contact to substrate.

It belongs to the peptidase S10 family.

The protein localises to the secreted. The enzyme catalyses Release of a C-terminal amino acid with broad specificity.. In terms of biological role, involved in degradation of small peptides. The sequence is that of Carboxypeptidase Y homolog ARB_05721 from Arthroderma benhamiae (strain ATCC MYA-4681 / CBS 112371) (Trichophyton mentagrophytes).